We begin with the raw amino-acid sequence, 362 residues long: Hepatic sodium/bile acid cotransporter (362 aa).

Residues 1 to 22 (MEVHNVSAPFNFSLPPGFGHRA) are Extracellular-facing. N-linked (GlcNAc...) asparagine glycans are attached at residues asparagine 5 and asparagine 11. The helical transmembrane segment at 23 to 44 (TDKALSIILVLMLLLIMLSLGC) threads the bilayer. Residues 45-47 (TME) are Cytoplasmic-facing. Residues 48–83 (FSKIKAHLWKPKGVIVALVAQFGIMPLAAFLLGKIF) form a helical membrane-spanning segment. Over 84–86 (HLS) the chain is Extracellular. The discontinuously helical transmembrane segment at 87–112 (NIEALAILICGCSPGGNLSNLFTLAM) threads the bilayer. At 113–115 (KGD) the chain is on the cytoplasmic side. Residues 116–142 (MNLSIVMTTCSSFSALGMMPLLLYVYS) form a helical membrane-spanning segment. At 143 to 156 (KGIYDGDLKDKVPY) the chain is on the extracellular side. Residues 157–179 (KGIMISLVIVLIPCTIGIVLKSK) form a helical membrane-spanning segment. Residues 180–183 (RPHY) are Cytoplasmic-facing. A helical membrane pass occupies residues 184 to 217 (VPYILKGGMIITFLLSVAVTALSVINVGNSIMFV). The Extracellular segment spans residues 218–219 (MT). Residues 220-243 (PHLLATSSLMPFSGFLMGYILSAL) traverse the membrane as a helical segment. Residues 244–247 (FQLN) are Cytoplasmic-facing. A discontinuously helical membrane pass occupies residues 248 to 273 (PSCRRTISMETGFQNIQLCSTILNVT). The Extracellular portion of the chain corresponds to 274–280 (FPPEVIG). Residues 281-311 (PLFFFPLLYMIFQLAEGLLIIIIFRCYEKIK) form a helical membrane-spanning segment. Residues 312–362 (PPKDQTKITYKAAATEDATPAALEKGTHNGNIPPLQPGPSPNGLNSGQMAN) are Cytoplasmic-facing. Threonine 330 is subject to Phosphothreonine. The interval 333-362 (ALEKGTHNGNIPPLQPGPSPNGLNSGQMAN) is disordered. Over residues 353–362 (NGLNSGQMAN) the composition is skewed to polar residues.

Belongs to the bile acid:sodium symporter (BASS) (TC 2.A.28) family. As to expression, highly expressed in liver and low expression in kidney.

It is found in the cell membrane. It catalyses the reaction taurocholate(out) + 2 Na(+)(out) = taurocholate(in) + 2 Na(+)(in). The catalysed reaction is taurochenodeoxycholate(out) + 2 Na(+)(out) = taurochenodeoxycholate(in) + 2 Na(+)(in). It carries out the reaction tauroursodeoxycholate(out) + 2 Na(+)(out) = tauroursodeoxycholate(in) + 2 Na(+)(in). The enzyme catalyses glycocholate(out) + 2 Na(+)(out) = glycocholate(in) + 2 Na(+)(in). It catalyses the reaction estrone 3-sulfate(out) + 2 Na(+)(out) = estrone 3-sulfate(in) + 2 Na(+)(in). The catalysed reaction is cholate(out) + 2 Na(+)(out) = cholate(in) + 2 Na(+)(in). It carries out the reaction tauronorcholate(out) + 2 Na(+)(out) = tauronorcholate(in) + 2 Na(+)(in). The enzyme catalyses taurodeoxycholate(out) + 2 Na(+)(out) = taurodeoxycholate(in) + 2 Na(+)(in). It catalyses the reaction tauroallocholate(out) + 2 Na(+)(out) = tauroallocholate(in) + 2 Na(+)(in). The catalysed reaction is taurohyodeoxycholate(out) + 2 Na(+)(out) = taurohyodeoxycholate(in) + 2 Na(+)(in). It carries out the reaction taurohyocholate(out) + 2 Na(+)(out) = taurohyocholate(in) + 2 Na(+)(in). The enzyme catalyses tauro-beta-muricholate(out) + 2 Na(+)(out) = tauro-beta-muricholate(in) + 2 Na(+)(in). Its activity is regulated as follows. The transport of bile acids is sodium-dependent. Functionally, as a major transporter of conjugated bile salts from plasma into the hepatocyte, it plays a key role in the enterohepatic circulation of bile salts necessary for the solubilization and absorption of dietary fat and fat-soluble vitamins. It is strictly dependent on the extracellular presence of sodium. It exhibits broad substrate specificity and transports various bile acids, such as taurocholate, cholate, as well as non-bile acid organic compounds, such as estrone sulfate. Works collaboratively with the ileal transporter (NTCP2), the organic solute transporter (OST), and the bile salt export pump (BSEP), to ensure efficacious biological recycling of bile acids during enterohepatic circulation. This is Hepatic sodium/bile acid cotransporter (Slc10a1) from Rattus norvegicus (Rat).